The chain runs to 352 residues: S-norcoclaurine synthase 1 (352 aa).

One can recognise a Fe2OG dioxygenase domain in the interval 200-304; that stretch reads KPLRTVFNRE…RLSIAAFHDP (105 aa). Residues His-228, Asp-230, and His-285 each contribute to the Fe cation site.

This sequence belongs to the iron/ascorbate-dependent oxidoreductase family. Monomer. Requires Fe cation as cofactor.

It catalyses the reaction (4-hydroxyphenyl)acetaldehyde + dopamine = (S)-norcoclaurine + H2O. With respect to regulation, inhibited by O-phenanthroline, but not by EDTA. Involved in the biosynthesis of the common precursor of all benzylisoquinoline alkaloids such as morphine, sanguinarine, codeine or berberine. Condenses dopamine and phenylacetaldehyde, 3,4-dihydrophenylacetaldehyde or 4-hydroxyphenylacetaldehyde. The polypeptide is S-norcoclaurine synthase 1 (NCS1) (Coptis japonica (Japanese goldthread)).